The chain runs to 820 residues: Phenylalanine--tRNA ligase beta subunit (820 aa).

One can recognise a tRNA-binding domain in the interval 42–154 (KGGLEGLVIG…AEAVPGTLAK (113 aa)). One can recognise a B5 domain in the interval 413–489 (PQDFMVELSY…RIYGYNNVEI (77 aa)). Mg(2+) contacts are provided by aspartate 467, aspartate 473, glutamate 476, and aspartate 477. An FDX-ACB domain is found at 727 to 820 (SKFPAVKRDL…LEDKLNAKLR (94 aa)).

It belongs to the phenylalanyl-tRNA synthetase beta subunit family. Type 1 subfamily. In terms of assembly, tetramer of two alpha and two beta subunits. Requires Mg(2+) as cofactor.

It is found in the cytoplasm. It carries out the reaction tRNA(Phe) + L-phenylalanine + ATP = L-phenylalanyl-tRNA(Phe) + AMP + diphosphate + H(+). This is Phenylalanine--tRNA ligase beta subunit from Bacteroides thetaiotaomicron (strain ATCC 29148 / DSM 2079 / JCM 5827 / CCUG 10774 / NCTC 10582 / VPI-5482 / E50).